The following is a 142-amino-acid chain: Hemoglobin subunit alpha-A (142 aa).

In terms of domain architecture, Globin spans 2–142; that stretch reads VLSANDKTNV…VGNVLTAKYR (141 aa). O2 is bound at residue H59. Heme b is bound at residue H88.

This sequence belongs to the globin family. In terms of assembly, heterotetramer of two alpha chains and two beta chains. As to expression, red blood cells.

Its function is as follows. Involved in oxygen transport from the lung to the various peripheral tissues. This chain is Hemoglobin subunit alpha-A (HBAA), found in Accipiter gentilis (Northern goshawk).